Reading from the N-terminus, the 642-residue chain is Threonine--tRNA ligase (642 aa).

Positions 1–63 (MSTVTVTLPD…TADVELEIVT (63 aa)) constitute a TGS domain. A catalytic region spans residues 242–533 (DHRKIGQEMD…LTEHYNGKFP (292 aa)). Zn(2+) is bound by residues cysteine 334, histidine 385, and histidine 510.

This sequence belongs to the class-II aminoacyl-tRNA synthetase family. Homodimer. The cofactor is Zn(2+).

It is found in the cytoplasm. It carries out the reaction tRNA(Thr) + L-threonine + ATP = L-threonyl-tRNA(Thr) + AMP + diphosphate + H(+). Functionally, catalyzes the attachment of threonine to tRNA(Thr) in a two-step reaction: L-threonine is first activated by ATP to form Thr-AMP and then transferred to the acceptor end of tRNA(Thr). The protein is Threonine--tRNA ligase of Haloarcula marismortui (strain ATCC 43049 / DSM 3752 / JCM 8966 / VKM B-1809) (Halobacterium marismortui).